Consider the following 297-residue polypeptide: Octopine catabolism/uptake operon regulatory protein OccR (297 aa).

In terms of domain architecture, HTH lysR-type spans 1–58 (MNLRQVEAFRAVMLTGQMTAAAELMLVTQPAISRLIKDFERATKLQLFERRGNHIIPT). Residues 18 to 37 (MTAAAELMLVTQPAISRLIK) constitute a DNA-binding region (H-T-H motif).

The protein belongs to the LysR transcriptional regulatory family.

In terms of biological role, positive regulatory protein for the occ operon involved in octopine catabolism and uptake. Also acts as a negative regulator of its expression. This is Octopine catabolism/uptake operon regulatory protein OccR (occR) from Rhizobium meliloti (Ensifer meliloti).